Consider the following 603-residue polypeptide: Prosaposin receptor GPR37 (603 aa).

The N-terminal stretch at 1 to 26 (MPAPGAPLSRTSRLLLLLLFKVSVSA) is a signal peptide. At 27 to 255 (ALSFVPEPRN…QESYGAYAVM (229 aa)) the chain is on the extracellular side. Asparagine 36 carries an N-linked (GlcNAc...) asparagine glycan. The tract at residues 39-232 (CLGESCSPLI…GGPRRGNSTN (194 aa)) is disordered. 3 stretches are compositionally biased toward basic and acidic residues: residues 51-79 (RSRD…EAEV), 145-158 (TSER…RDEI), and 165-175 (HSVKTEPEPRD). Residues asparagine 212 and asparagine 229 are each glycosylated (N-linked (GlcNAc...) asparagine). A helical membrane pass occupies residues 256-276 (CLSVVIFGTGIIGNLAVMCIV). Over 277 to 289 (CHNYYMRSISNSL) the chain is Cytoplasmic. A helical transmembrane segment spans residues 290 to 310 (LANLAFWDFLIIFFCLPLVIF). Residues 311–325 (HELTKKWLLEDFSCK) lie on the Extracellular side of the membrane. A disulfide bond links cysteine 324 and cysteine 409. The chain crosses the membrane as a helical span at residues 326-346 (IVPYIEVASLGVTTFTLCALC). At 347–369 (IDRFRAATNVQMYYEMIENCSST) the chain is on the cytoplasmic side. The helical transmembrane segment at 370–390 (TAKLAVIWVGALLLALPEVVL) threads the bilayer. At 391–433 (RQLSKEDLGFSGQAPAERCVIKISPDLPDTIYVLALTYDGARL) the chain is on the extracellular side. Residues 434 to 454 (WWYFGCYFCLPTLFTITCSLV) traverse the membrane as a helical segment. Residues 455–483 (TARKIRKAEKASTRGNKRQIHLESQMNCT) are Cytoplasmic-facing. The helical transmembrane segment at 484 to 504 (VVALTILYGFCIIPENICNIV) threads the bilayer. The Extracellular segment spans residues 505 to 521 (TAYMATGVSQQTMDLLN). The chain crosses the membrane as a helical span at residues 522-542 (IISQFLLFFKSCVTPVLLFCL). Topologically, residues 543-603 (CRPFSRAFME…STFASVGTHC (61 aa)) are cytoplasmic.

It belongs to the G-protein coupled receptor 1 family. As to quaternary structure, forms a complex with PRKN, STUB1 and HSP70. The amount of STUB1 in the complex increases during ER stress. STUB1 promotes the dissociation of HSP70 from PRKN, thus facilitating PRKN-mediated GPR37 ubiquitination. Interacts with PACRG. In terms of processing, the N-terminus is cleaved by ADAM10 metalloproteinase; mediating limited proteolysis leading to the release of receptor ectodomain by shedding. In addition, cleaved by FURIN between Arg-53 and Asp-54. Ubiquitinated by PRKN in the presence of UBE2E1 and UBE2L3 in the endoplasmic reticulum. The unfolded form is specifically ubiquitinated by SYVN1, which promotes its proteasomal degradation and prevents neuronal cell death. As to expression, highly expressed in the brain. High levels of expression were seen in fiber tracts such as the corpus callosum, anterior commissure, fornix, internal capsule, cerebral peduncles, and stria terminalis. Additionally, moderate levels of expression were seen in the pyramidal tracts and cerebellar peduncles, as well as in the spinal tract of the trigeminal nerve and the spinal fasciculi.

The protein resides in the cell projection. It localises to the dendrite. It is found in the synapse. Its subcellular location is the cell membrane. The protein localises to the endoplasmic reticulum membrane. In terms of biological role, G-protein-coupled receptor that plays a role in several physiological pathways such as resolution of inflammatory pain and oligodendrocyte differentiation. Acts as a receptor for several ligands including prosaposin, osteocalcin or neuroprotectin D1. Ligand binding induces endocytosis, followed by an ERK phosphorylation cascade. Acts as a receptor for osteocalcin (OCN) to regulate oligodendrocyte differentiation and central nervous system myelination. Mechanistically, plays a negative role in oligodendrocyte differentiation and myelination during development via activation of the ERK1/2 signaling pathway. Therefore, regulates the stability of myelin or resistance of myelin itself to demyelination. Upon activation by neuroprotectin D1 (NPD1), promotes the activation of phagocytosis in macrophages as well as the shift in cytokine release toward an anti-inflammatory profile, and thus helps to reverse inflammatory pain. In addition, the increased macrophage phagocytosis mediates protection against sepsis upon pathogen infection. Additionally, extracellular vesicles derived from efferocyte express prosaposin, which binds to macrophage GPR37 to increase expression of the efferocytosis receptor TIM4 via an ERK-AP1-dependent signaling axis, leading to increased macrophage efferocytosis efficiency and accelerated resolution of inflammation. May also act as a maturation factor of LRP6, protecting LRP6 from the endoplasmic reticulum (ER)-associated protein degradation (ERAD) and thereby promoting the Wnt/beta-catenin signaling pathway. This is Prosaposin receptor GPR37 (Gpr37) from Rattus norvegicus (Rat).